Reading from the N-terminus, the 204-residue chain is B9 domain-containing protein 1 (204 aa).

A C2 B9-type domain is found at 9-127 (FLLMITGQVE…TIPMFVPEST (119 aa)).

The protein belongs to the B9D family. Part of the tectonic-like complex (also named B9 complex).

The protein localises to the cytoplasm. It is found in the cytoskeleton. The protein resides in the cilium basal body. In terms of biological role, component of the tectonic-like complex, a complex localized at the transition zone of primary cilia and acting as a barrier that prevents diffusion of transmembrane proteins between the cilia and plasma membranes. Required for ciliogenesis and sonic hedgehog/SHH signaling. The protein is B9 domain-containing protein 1 (B9d1) of Mus musculus (Mouse).